The chain runs to 426 residues: Enolase (426 aa).

Gln165 contacts (2R)-2-phosphoglycerate. Glu209 functions as the Proton donor in the catalytic mechanism. Residues Asp244, Glu287, and Asp313 each contribute to the Mg(2+) site. Residues Lys338, Arg367, Ser368, and Lys389 each coordinate (2R)-2-phosphoglycerate. The active-site Proton acceptor is the Lys338.

It belongs to the enolase family. Requires Mg(2+) as cofactor.

It localises to the cytoplasm. The protein resides in the secreted. It is found in the cell surface. The enzyme catalyses (2R)-2-phosphoglycerate = phosphoenolpyruvate + H2O. It functions in the pathway carbohydrate degradation; glycolysis; pyruvate from D-glyceraldehyde 3-phosphate: step 4/5. Catalyzes the reversible conversion of 2-phosphoglycerate (2-PG) into phosphoenolpyruvate (PEP). It is essential for the degradation of carbohydrates via glycolysis. In Methanococcus maripaludis (strain C5 / ATCC BAA-1333), this protein is Enolase.